Reading from the N-terminus, the 508-residue chain is Chromosomal replication initiator protein DnaA (508 aa).

The tract at residues 1 to 90 (MSVELWQQCV…RRSSAPRAAP (90 aa)) is domain I, interacts with DnaA modulators. A domain II region spans residues 91–171 (NAPVSAAVAA…QVEGALKHTS (81 aa)). Positions 130-160 (EVEEPSSRDSFDSMSDSGSVPAASGRTEQRT) are disordered. The interval 172-388 (YLNRTFTFET…GALKRVIAHS (217 aa)) is domain III, AAA+ region. ATP-binding residues include G216, G218, K219, and T220. Positions 389 to 508 (HFMGRDITIE…YKNLLRTLTT (120 aa)) are domain IV, binds dsDNA.

It belongs to the DnaA family. As to quaternary structure, oligomerizes as a right-handed, spiral filament on DNA at oriC.

The protein resides in the cytoplasm. In terms of biological role, plays an essential role in the initiation and regulation of chromosomal replication. ATP-DnaA binds to the origin of replication (oriC) to initiate formation of the DNA replication initiation complex once per cell cycle. Binds the DnaA box (a 9 base pair repeat at the origin) and separates the double-stranded (ds)DNA. Forms a right-handed helical filament on oriC DNA; dsDNA binds to the exterior of the filament while single-stranded (ss)DNA is stabiized in the filament's interior. The ATP-DnaA-oriC complex binds and stabilizes one strand of the AT-rich DNA unwinding element (DUE), permitting loading of DNA polymerase. After initiation quickly degrades to an ADP-DnaA complex that is not apt for DNA replication. Binds acidic phospholipids. This Pseudomonas entomophila (strain L48) protein is Chromosomal replication initiator protein DnaA.